The primary structure comprises 37 residues: Large ribosomal subunit protein bL36c (37 aa).

This sequence belongs to the bacterial ribosomal protein bL36 family.

Its subcellular location is the plastid. The protein resides in the chloroplast. The polypeptide is Large ribosomal subunit protein bL36c (Staurastrum punctulatum (Green alga)).